A 1531-amino-acid chain; its full sequence is DNA topoisomerase 2-alpha (1531 aa).

At Met-1 the chain carries N-acetylmethionine. The residue at position 4 (Ser-4) is a Phosphoserine. Lys-17 is covalently cross-linked (Glycyl lysine isopeptide (Lys-Gly) (interchain with G-Cter in SUMO2)). ATP-binding positions include Asn-91, Asn-120, and 148–150 (SSN). Glycyl lysine isopeptide (Lys-Gly) (interchain with G-Cter in SUMO2) cross-links involve residues Lys-156 and Lys-157. An ATP-binding site is contributed by 161–168 (GRNGYGAK). Lys-261 participates in a covalent cross-link: Glycyl lysine isopeptide (Lys-Gly) (interchain with G-Cter in SUMO2). Phosphothreonine is present on Thr-282. The interval 342-344 (KKK) is interaction with DNA. A Glycyl lysine isopeptide (Lys-Gly) (interchain with G-Cter in SUMO2) cross-link involves residue Lys-352. 376-378 (QTK) provides a ligand contact to ATP. Residues Lys-386, Lys-397, Lys-416, Lys-418, Lys-425, and Lys-440 each participate in a glycyl lysine isopeptide (Lys-Gly) (interchain with G-Cter in SUMO2) cross-link. A Toprim domain is found at 455-572 (CTLILTEGDS…SLLRHRFLEE (118 aa)). Glu-461 provides a ligand contact to Mg(2+). Residues Lys-466, Lys-480, and Lys-529 each participate in a glycyl lysine isopeptide (Lys-Gly) (interchain with G-Cter in SUMO2) cross-link. Mg(2+) contacts are provided by Asp-541 and Asp-543. Residues Lys-584, Lys-599, Lys-614, Lys-622, Lys-625, Lys-632, Lys-639, Lys-655, Lys-662, and Lys-676 each participate in a glycyl lysine isopeptide (Lys-Gly) (interchain with G-Cter in SUMO2) cross-link. A Topo IIA-type catalytic domain is found at 715 to 1171 (IPSMVDGLKP…SPSDLWKEDL (457 aa)). Tyr-805 (O-(5'-phospho-DNA)-tyrosine intermediate) is an active-site residue. The interval 990–999 (KLQTSLTCNS) is interaction with DNA. A Nuclear export signal motif is present at residues 1018-1028 (ILRDFFELRLK). Residue Lys-1075 forms a Glycyl lysine isopeptide (Lys-Gly) (interchain with G-Cter in SUMO2) linkage. 2 disordered regions span residues 1090–1123 (WKEA…DSGP) and 1184–1531 (KEKQ…DDLF). Residues 1099-1108 (DEEENEESDN) are compositionally biased toward acidic residues. At Ser-1106 the chain carries Phosphoserine; by CK1. Glycyl lysine isopeptide (Lys-Gly) (interchain with G-Cter in SUMO2) cross-links involve residues Lys-1114, Lys-1196, and Lys-1204. Phosphothreonine is present on Thr-1205. A Phosphoserine modification is found at Ser-1213. A Glycyl lysine isopeptide (Lys-Gly) (interchain with G-Cter in SUMO2) cross-link involves residue Lys-1228. A Glycyl lysine isopeptide (Lys-Gly) (interchain with G-Cter in SUMO1); alternate cross-link involves residue Lys-1240. Residue Lys-1240 forms a Glycyl lysine isopeptide (Lys-Gly) (interchain with G-Cter in SUMO2); alternate linkage. Thr-1244 is subject to Phosphothreonine. Ser-1247 carries the phosphoserine modification. Over residues 1256–1272 (EGLKQRLEKKQKREPGT) the composition is skewed to basic and acidic residues. Residues Lys-1259, Lys-1276, Lys-1283, and Lys-1286 each participate in a glycyl lysine isopeptide (Lys-Gly) (interchain with G-Cter in SUMO2) cross-link. Phosphoserine is present on residues Ser-1295, Ser-1297, Ser-1299, and Ser-1302. Thr-1327 is modified (phosphothreonine). Residues 1330-1349 (LDSDEDFSDFDEKTDDEDFV) are compositionally biased toward acidic residues. Phosphoserine occurs at positions 1332 and 1337. The residue at position 1343 (Thr-1343) is a Phosphothreonine; by PLK3. A phosphoserine mark is found at Ser-1351 and Ser-1354. Glycyl lysine isopeptide (Lys-Gly) (interchain with G-Cter in SUMO2) cross-links involve residues Lys-1363, Lys-1367, and Lys-1373. Ser-1374 and Ser-1377 each carry phosphoserine. Lys-1385 is covalently cross-linked (Glycyl lysine isopeptide (Lys-Gly) (interchain with G-Cter in SUMO2)). Phosphoserine occurs at positions 1387, 1391, 1392, and 1393. The span at 1406 to 1431 (TNPVPKKNVTVKKTAAKSQSSTSTTG) shows a compositional bias: low complexity. A Glycyl lysine isopeptide (Lys-Gly) (interchain with G-Cter in SUMO2); alternate cross-link involves residue Lys-1422. Lys-1422 bears the N6-acetyllysine; alternate mark. Residues 1433–1439 (KKRAAPK) form an interaction with PLSCR1 region. A Glycyl lysine isopeptide (Lys-Gly) (interchain with G-Cter in SUMO2); alternate cross-link involves residue Lys-1442. At Lys-1442 the chain carries N6-acetyllysine; alternate. Ser-1449 carries the post-translational modification Phosphoserine. Glycyl lysine isopeptide (Lys-Gly) (interchain with G-Cter in SUMO2) cross-links involve residues Lys-1454 and Lys-1459. Ser-1469 is modified (phosphoserine; by CK2). Residue Thr-1470 is modified to Phosphothreonine. Ser-1471, Ser-1474, and Ser-1476 each carry phosphoserine. Residues Lys-1484 and Lys-1492 each participate in a glycyl lysine isopeptide (Lys-Gly) (interchain with G-Cter in SUMO2) cross-link. The span at 1491-1502 (SKGESDDFHMDF) shows a compositional bias: basic and acidic residues. Phosphoserine is present on residues Ser-1495, Ser-1504, and Ser-1525.

The protein belongs to the type II topoisomerase family. Homodimer. Interacts with COPS5. Interacts with RECQL5; this stimulates DNA decatenation. Interacts with SETMAR; stimulates the topoisomerase activity. Interacts with DHX9; this interaction occurs in a E2 enzyme UBE2I- and RNA-dependent manner, negatively regulates DHX9-mediated double-stranded DNA and RNA duplex helicase activity and stimulates TOP2A-mediated supercoiled DNA relaxation activity. Interacts with HNRNPU (via C-terminus); this interaction protects the topoisomerase TOP2A from degradation and positively regulates the relaxation of supercoiled DNA in a RNA-dependent manner. Interacts with MCM3AP isoform GANP. Interacts with ERCC6. Interacts with PLSCR1. Interacts with GCNA; this interaction allows the resolution of topoisomerase II (TOP2A) DNA-protein cross-links. Interacts with POL1RA/RPA1 (via dock II) and UBTF in the context of Pol I complex; may assist Pol I transcription initiation by releasing supercoils occurring during DNA unwinding. Interacts with TPRN; TPRN interacts with a number of DNA damage response proteins, is recruited to sites of DNA damage and may play a role in DNA damage repair. Mg(2+) is required as a cofactor. It depends on Mn(2+) as a cofactor. Requires Ca(2+) as cofactor. Post-translationally, phosphorylation has no effect on catalytic activity. However, phosphorylation at Ser-1106 by CSNK1D/CK1 promotes DNA cleavable complex formation. (Microbial infection) Deubiquitinated by Epstein-Barr virus BPLF1; leading to stabilized SUMOylated TOP2A trapped in cleavage complexes, which halts the DNA damage response to TOP2A-induced double-strand DNA breaks. In terms of processing, SUMOylated. In terms of tissue distribution, expressed in the tonsil, spleen, lymph node, thymus, skin, pancreas, testis, colon, kidney, liver, brain and lung. Also found in high-grade lymphomas, squamous cell lung tumors and seminomas.

The protein localises to the cytoplasm. The protein resides in the nucleus. It localises to the nucleoplasm. It is found in the nucleolus. It catalyses the reaction ATP-dependent breakage, passage and rejoining of double-stranded DNA.. Specifically inhibited by the intercalating agent amsacrine. Key decatenating enzyme that alters DNA topology by binding to two double-stranded DNA molecules, generating a double-stranded break in one of the strands, passing the intact strand through the broken strand, and religating the broken strand. May play a role in regulating the period length of BMAL1 transcriptional oscillation. The polypeptide is DNA topoisomerase 2-alpha (TOP2A) (Homo sapiens (Human)).